We begin with the raw amino-acid sequence, 370 residues long: 3-isopropylmalate dehydrogenase (370 aa).

Residue 77-90 coordinates NAD(+); the sequence is GPKWDAVPYEVRPE. Residues R97, R107, R135, and D226 each coordinate substrate. Mg(2+) is bound by residues D226, D250, and D254. Position 290–302 (290–302) interacts with NAD(+); that stretch reads GSAPDIAGTGVAN.

Belongs to the isocitrate and isopropylmalate dehydrogenases family. LeuB type 1 subfamily. In terms of assembly, homodimer. The cofactor is Mg(2+). Mn(2+) is required as a cofactor.

It localises to the cytoplasm. It catalyses the reaction (2R,3S)-3-isopropylmalate + NAD(+) = 4-methyl-2-oxopentanoate + CO2 + NADH. It participates in amino-acid biosynthesis; L-leucine biosynthesis; L-leucine from 3-methyl-2-oxobutanoate: step 3/4. Its function is as follows. Catalyzes the oxidation of 3-carboxy-2-hydroxy-4-methylpentanoate (3-isopropylmalate) to 3-carboxy-4-methyl-2-oxopentanoate. The product decarboxylates to 4-methyl-2 oxopentanoate. This is 3-isopropylmalate dehydrogenase from Rhizobium meliloti (strain 1021) (Ensifer meliloti).